The chain runs to 298 residues: GTP cyclohydrolase FolE2 (298 aa).

It belongs to the GTP cyclohydrolase IV family.

The catalysed reaction is GTP + H2O = 7,8-dihydroneopterin 3'-triphosphate + formate + H(+). It functions in the pathway cofactor biosynthesis; 7,8-dihydroneopterin triphosphate biosynthesis; 7,8-dihydroneopterin triphosphate from GTP: step 1/1. Functionally, converts GTP to 7,8-dihydroneopterin triphosphate. This Pseudomonas paraeruginosa (strain DSM 24068 / PA7) (Pseudomonas aeruginosa (strain PA7)) protein is GTP cyclohydrolase FolE2.